A 350-amino-acid chain; its full sequence is GDSL esterase/lipase At2g04570 (350 aa).

The first 23 residues, 1-23 (MGHLKSLFTILFLIAMSSTVTFA), serve as a signal peptide directing secretion. Ser-35 functions as the Nucleophile in the catalytic mechanism. N-linked (GlcNAc...) asparagine glycosylation is found at Asn-98 and Asn-117. Catalysis depends on residues Asp-325 and His-328. A glycan (N-linked (GlcNAc...) asparagine) is linked at Asn-343.

Belongs to the 'GDSL' lipolytic enzyme family.

It is found in the secreted. This chain is GDSL esterase/lipase At2g04570, found in Arabidopsis thaliana (Mouse-ear cress).